The primary structure comprises 106 residues: Thioredoxin-2 (106 aa).

One can recognise a Thioredoxin domain in the interval 1-106 (MVYQVKDKAD…RLEDVIKANI (106 aa)). Active-site nucleophile residues include cysteine 32 and cysteine 35. A disulfide bridge links cysteine 32 with cysteine 35.

Belongs to the thioredoxin family. As to quaternary structure, monomer.

Functionally, participates in various redox reactions through the reversible oxidation of its active center dithiol to a disulfide and catalyzes dithiol-disulfide exchange reactions. As a reducing substrate of peroxiredoxin 1, thioredoxin 2 is preferred over thioredoxin 1. The polypeptide is Thioredoxin-2 (Drosophila melanogaster (Fruit fly)).